The sequence spans 275 residues: Elongation factor Ts (275 aa).

The involved in Mg(2+) ion dislocation from EF-Tu stretch occupies residues T76–V79.

The protein belongs to the EF-Ts family.

The protein resides in the cytoplasm. In terms of biological role, associates with the EF-Tu.GDP complex and induces the exchange of GDP to GTP. It remains bound to the aminoacyl-tRNA.EF-Tu.GTP complex up to the GTP hydrolysis stage on the ribosome. The sequence is that of Elongation factor Ts from Salinispora tropica (strain ATCC BAA-916 / DSM 44818 / JCM 13857 / NBRC 105044 / CNB-440).